The sequence spans 221 residues: Cyclin-U3-1 (221 aa).

Belongs to the cyclin family. Cyclin U/P subfamily. Interacts with CDKA-1 and CDKB1-1. In terms of tissue distribution, expressed in roots, stems and flowers. Expressed in the shoot apex, leaf primordia and young leaves.

In Arabidopsis thaliana (Mouse-ear cress), this protein is Cyclin-U3-1 (CYCU3-1).